Here is a 151-residue protein sequence, read N- to C-terminus: Pollen allergen Sal k 5.0101 (151 aa).

3 disulfide bridges follow: Cys-17/Cys-88, Cys-20/Cys-132, and Cys-41/Cys-76. Asn-43 carries N-linked (GlcNAc...) asparagine glycosylation.

This sequence belongs to the Ole e I family. Post-translationally, N-glycosylated. Contains fucose monosaccharides in the glycan structure. As to expression, expressed in pollen (at protein level).

It is found in the secreted. This Kali turgidum (Prickly saltwort) protein is Pollen allergen Sal k 5.0101.